A 525-amino-acid chain; its full sequence is GMP synthase [glutamine-hydrolyzing] (525 aa).

The region spanning 9-207 (RILILDFGSQ…VRDICQCEAL (199 aa)) is the Glutamine amidotransferase type-1 domain. Catalysis depends on C86, which acts as the Nucleophile. Active-site residues include H181 and E183. The 193-residue stretch at 208 to 400 (WTPAKIIDDA…LGLPYDMLYR (193 aa)) folds into the GMPS ATP-PPase domain. Position 235-241 (235-241 (SGGVDSS)) interacts with ATP.

In terms of assembly, homodimer.

The catalysed reaction is XMP + L-glutamine + ATP + H2O = GMP + L-glutamate + AMP + diphosphate + 2 H(+). The protein operates within purine metabolism; GMP biosynthesis; GMP from XMP (L-Gln route): step 1/1. Functionally, catalyzes the synthesis of GMP from XMP. The chain is GMP synthase [glutamine-hydrolyzing] from Shigella flexneri.